Consider the following 343-residue polypeptide: Anthranilate phosphoribosyltransferase (343 aa).

Residues Gly84, Gly87–Asp88, Thr92, Asn94–Thr97, Lys112–Ser120, and Ser124 contribute to the 5-phospho-alpha-D-ribose 1-diphosphate site. Position 84 (Gly84) interacts with anthranilate. Residue Ser96 participates in Mg(2+) binding. Asn115 serves as a coordination point for anthranilate. Position 170 (Arg170) interacts with anthranilate. 2 residues coordinate Mg(2+): Asp229 and Glu230.

Belongs to the anthranilate phosphoribosyltransferase family. As to quaternary structure, homodimer. The cofactor is Mg(2+).

The catalysed reaction is N-(5-phospho-beta-D-ribosyl)anthranilate + diphosphate = 5-phospho-alpha-D-ribose 1-diphosphate + anthranilate. It participates in amino-acid biosynthesis; L-tryptophan biosynthesis; L-tryptophan from chorismate: step 2/5. Catalyzes the transfer of the phosphoribosyl group of 5-phosphorylribose-1-pyrophosphate (PRPP) to anthranilate to yield N-(5'-phosphoribosyl)-anthranilate (PRA). The chain is Anthranilate phosphoribosyltransferase from Burkholderia ambifaria (strain ATCC BAA-244 / DSM 16087 / CCUG 44356 / LMG 19182 / AMMD) (Burkholderia cepacia (strain AMMD)).